Here is a 359-residue protein sequence, read N- to C-terminus: DNA-directed RNA polymerase RPB3-11 homolog (359 aa).

This sequence in the N-terminal section; belongs to the archaeal RpoD/eukaryotic RPB3 RNA polymerase subunit family. The protein in the C-terminal section; belongs to the archaeal RpoL/eukaryotic RPB11/RPC19 RNA polymerase subunit family. As to quaternary structure, part of the viral DNA-directed RNA polymerase that consists of 8 polII-like subunits (RPB1, RPB2, RPB3, RPB5, RPB6, RPB7, RPB9, RPB10), a capping enzyme and a termination factor.

The protein localises to the host cytoplasm. It is found in the virion. Its function is as follows. Component of the DNA-directed RNA polymerase (RNAP) that catalyzes the transcription in the cytoplasm of viral DNA into RNA using the four ribonucleoside triphosphates as substrates. This is DNA-directed RNA polymerase RPB3-11 homolog from Ornithodoros (relapsing fever ticks).